A 206-amino-acid polypeptide reads, in one-letter code: MKRPVLIGITGGTGSGKSTVAKEIYNKFDEACIAMIEQDSYYKDQSSMPFEERCKKNYDHPDAFDNELLIDHLKNLIDLNVIEKPIYDFEAHNRKEETIKVKPRDIIIVEGILVLQDPRVRELLDIKIYVDTDADVRIIRRLLRDINERGRTVDSVINQYLTVVRPMHMQFIEPSKRYADIIIPEGGHNRVAVDMMVANIKHLLQE.

Residue 11 to 18 participates in ATP binding; sequence GGTGSGKS.

It belongs to the uridine kinase family.

The protein localises to the cytoplasm. It carries out the reaction uridine + ATP = UMP + ADP + H(+). The catalysed reaction is cytidine + ATP = CMP + ADP + H(+). The protein operates within pyrimidine metabolism; CTP biosynthesis via salvage pathway; CTP from cytidine: step 1/3. It functions in the pathway pyrimidine metabolism; UMP biosynthesis via salvage pathway; UMP from uridine: step 1/1. The sequence is that of Uridine kinase from Clostridium botulinum (strain Kyoto / Type A2).